The sequence spans 178 residues: ATP synthase subunit d, mitochondrial (178 aa).

The interval 149–178 (NKPTFWPHTPEEQVGYKSKEQLEAEAQGHH) is disordered. The segment covering 165 to 178 (KSKEQLEAEAQGHH) has biased composition (basic and acidic residues).

This sequence belongs to the ATPase d subunit family. In terms of assembly, F-type ATPases have 2 components, CF(1) - the catalytic core - and CF(0) - the membrane proton channel. CF(0) seems to have nine subunits: a, b, c, d, e, f, g, F6 and 8 (or A6L).

The protein localises to the mitochondrion. Its subcellular location is the mitochondrion inner membrane. In terms of biological role, mitochondrial membrane ATP synthase (F(1)F(0) ATP synthase or Complex V) produces ATP from ADP in the presence of a proton gradient across the membrane which is generated by electron transport complexes of the respiratory chain. F-type ATPases consist of two structural domains, F(1) - containing the extramembraneous catalytic core, and F(0) - containing the membrane proton channel, linked together by a central stalk and a peripheral stalk. During catalysis, ATP synthesis in the catalytic domain of F(1) is coupled via a rotary mechanism of the central stalk subunits to proton translocation. Part of the complex F(0) domain and the peripheric stalk, which acts as a stator to hold the catalytic alpha(3)beta(3) subcomplex and subunit a/ATP6 static relative to the rotary elements. This Drosophila melanogaster (Fruit fly) protein is ATP synthase subunit d, mitochondrial.